The chain runs to 203 residues: EF-hand calcium-binding domain-containing protein 8 (203 aa).

The interval 61–107 is disordered; it reads SSEKPGESPKPQKMAQPGGSQKKETSRSVPVTDPTSHNSEINQRDQQ. Residues 87-107 are compositionally biased toward polar residues; it reads RSVPVTDPTSHNSEINQRDQQ. 2 EF-hand domains span residues 111–145 and 146–181; these read MHLA…VLSS and MSEE…EFQG.

The chain is EF-hand calcium-binding domain-containing protein 8 (Efcab8) from Mus musculus (Mouse).